A 443-amino-acid chain; its full sequence is Xaa-Pro dipeptidase (443 aa).

Mn(2+) contacts are provided by D246, D257, H339, E384, and E423.

Belongs to the peptidase M24B family. Bacterial-type prolidase subfamily. It depends on Mn(2+) as a cofactor.

It catalyses the reaction Xaa-L-Pro dipeptide + H2O = an L-alpha-amino acid + L-proline. Splits dipeptides with a prolyl residue in the C-terminal position. The protein is Xaa-Pro dipeptidase of Escherichia coli O8 (strain IAI1).